The chain runs to 382 residues: Na(+)/H(+) antiporter NhaA 2 (382 aa).

10 helical membrane-spanning segments follow: residues 11 to 31, 45 to 65, 91 to 111, 116 to 136, 145 to 165, 171 to 191, 197 to 214, 287 to 307, 324 to 344, and 353 to 373; these read FSVP…LDPA, LSFH…IAAV, LGGV…VGLP, GWGI…RMVF, YLLL…ALFY, PVVA…WGLG, SYWP…IGLH, WLVL…FGLL, LLVA…VSGS, and AAAK…MLLG.

It belongs to the NhaA Na(+)/H(+) (TC 2.A.33) antiporter family.

The protein localises to the cell inner membrane. It carries out the reaction Na(+)(in) + 2 H(+)(out) = Na(+)(out) + 2 H(+)(in). Its function is as follows. Na(+)/H(+) antiporter that extrudes sodium in exchange for external protons. This is Na(+)/H(+) antiporter NhaA 2 from Pelobacter propionicus (strain DSM 2379 / NBRC 103807 / OttBd1).